Consider the following 26-residue polypeptide: Morintide mO4 (26 aa).

The Chitin-binding type-1 domain occupies 1 to 26 (NRLCCSQYGFCGTTSEYCSRVSGCQS). The cysteines at positions 4 and 18 are disulfide-linked.

Seeds (at protein level).

Chitin-binding protein which functions in defense against chitin-containing fungal pathogens. This chain is Morintide mO4, found in Moringa oleifera (Horseradish tree).